The chain runs to 315 residues: Lipoyl synthase (315 aa).

Residues Cys-62, Cys-67, Cys-73, Cys-88, Cys-92, Cys-95, and Ser-302 each contribute to the [4Fe-4S] cluster site. Residues Phe-74 to Arg-291 enclose the Radical SAM core domain.

This sequence belongs to the radical SAM superfamily. Lipoyl synthase family. [4Fe-4S] cluster is required as a cofactor.

It localises to the cytoplasm. The enzyme catalyses [[Fe-S] cluster scaffold protein carrying a second [4Fe-4S](2+) cluster] + N(6)-octanoyl-L-lysyl-[protein] + 2 oxidized [2Fe-2S]-[ferredoxin] + 2 S-adenosyl-L-methionine + 4 H(+) = [[Fe-S] cluster scaffold protein] + N(6)-[(R)-dihydrolipoyl]-L-lysyl-[protein] + 4 Fe(3+) + 2 hydrogen sulfide + 2 5'-deoxyadenosine + 2 L-methionine + 2 reduced [2Fe-2S]-[ferredoxin]. It functions in the pathway protein modification; protein lipoylation via endogenous pathway; protein N(6)-(lipoyl)lysine from octanoyl-[acyl-carrier-protein]: step 2/2. Its function is as follows. Catalyzes the radical-mediated insertion of two sulfur atoms into the C-6 and C-8 positions of the octanoyl moiety bound to the lipoyl domains of lipoate-dependent enzymes, thereby converting the octanoylated domains into lipoylated derivatives. The chain is Lipoyl synthase from Azoarcus sp. (strain BH72).